Consider the following 364-residue polypeptide: tRNA 2-selenouridine synthase (364 aa).

One can recognise a Rhodanese domain in the interval 14–137 (LLADTPLIDV…LRQTAIQATW (124 aa)). The S-selanylcysteine intermediate role is filled by Cys97.

This sequence belongs to the SelU family. Monomer.

It carries out the reaction 5-methylaminomethyl-2-thiouridine(34) in tRNA + selenophosphate + (2E)-geranyl diphosphate + H2O + H(+) = 5-methylaminomethyl-2-selenouridine(34) in tRNA + (2E)-thiogeraniol + phosphate + diphosphate. It catalyses the reaction 5-methylaminomethyl-2-thiouridine(34) in tRNA + (2E)-geranyl diphosphate = 5-methylaminomethyl-S-(2E)-geranyl-thiouridine(34) in tRNA + diphosphate. The catalysed reaction is 5-methylaminomethyl-S-(2E)-geranyl-thiouridine(34) in tRNA + selenophosphate + H(+) = 5-methylaminomethyl-2-(Se-phospho)selenouridine(34) in tRNA + (2E)-thiogeraniol. The enzyme catalyses 5-methylaminomethyl-2-(Se-phospho)selenouridine(34) in tRNA + H2O = 5-methylaminomethyl-2-selenouridine(34) in tRNA + phosphate. Involved in the post-transcriptional modification of the uridine at the wobble position (U34) of tRNA(Lys), tRNA(Glu) and tRNA(Gln). Catalyzes the conversion of 2-thiouridine (S2U-RNA) to 2-selenouridine (Se2U-RNA). Acts in a two-step process involving geranylation of 2-thiouridine (S2U) to S-geranyl-2-thiouridine (geS2U) and subsequent selenation of the latter derivative to 2-selenouridine (Se2U) in the tRNA chain. This is tRNA 2-selenouridine synthase from Salmonella gallinarum (strain 287/91 / NCTC 13346).